Here is a 375-residue protein sequence, read N- to C-terminus: 23S rRNA (uracil(747)-C(5))-methyltransferase RlmC (375 aa).

Positions 3, 11, 14, and 87 each coordinate [4Fe-4S] cluster. Residues glutamine 212, phenylalanine 241, glutamate 262, and asparagine 307 each contribute to the S-adenosyl-L-methionine site. Cysteine 334 functions as the Nucleophile in the catalytic mechanism.

The protein belongs to the class I-like SAM-binding methyltransferase superfamily. RNA M5U methyltransferase family. RlmC subfamily.

It carries out the reaction uridine(747) in 23S rRNA + S-adenosyl-L-methionine = 5-methyluridine(747) in 23S rRNA + S-adenosyl-L-homocysteine + H(+). In terms of biological role, catalyzes the formation of 5-methyl-uridine at position 747 (m5U747) in 23S rRNA. In Escherichia fergusonii (strain ATCC 35469 / DSM 13698 / CCUG 18766 / IAM 14443 / JCM 21226 / LMG 7866 / NBRC 102419 / NCTC 12128 / CDC 0568-73), this protein is 23S rRNA (uracil(747)-C(5))-methyltransferase RlmC.